Reading from the N-terminus, the 741-residue chain is MAEGSFSVQSESYSVEDMDEGSDEVGEEEMVEGNDYEEFGAFGGYGTLTSFDIHILRAFGSLGPGLRILSNEPWELENPVLAQTLVEALQLDPETLANETAARAANVARAAASNRAARAAAAAARTAFSQVVASHRVATPQVSGEDTQPTTYAAEAQGPTPEPPLASPQTSQMLVTSKMAAPEAPATSAQSQTGSPAQEAATEGPSSACAFSQAPCAREVDANRPSTAFLGQNDVFDFTQPAGVSGMAFPRPKRPAPAQEAATEGPSAASGVPQTGPGREVAATRPKTTKSGKALAKTRWVEPQNVVAAAAAKAKMATSIPEPEGAAAATAQHSAEPWARMGGKRTKKSKHLDDEYESSEEERETPAVPPTWRASQPSLTVRAQLAPRPPMAPRSQIPSRHVLCLPPRNVTLLQERANKLVKYLMIKDYKKIPIKRADMLKDVIREYDEHFPEIIERATYTLEKKFGIHLKEIDKEEHLYILVCTRDSSARLLGKTKDTPRLSLLLVILGVIFMNGNRASEAVLWEALRKMGLRPGVRHPFLGDLRKLITDDFVKQKYLEYKKIPNSNPPEYEFLWGLRARHETSKMRVLRFIAQNQNRDPREWKAHFLEAVDDAFKTMDVDMAEEHARAQMRAQMNIGDEALIGRWSWDDIQVELLTWDEDGDFGDAWARIPFAFWARYHQYILNSNRANRRATWRAGVSSGTNGGASTSVLDGPSTSSTIRTRNAARAGASFFSWIQHR.

The span at 1–13 shows a compositional bias: polar residues; the sequence is MAEGSFSVQSESY. Disordered regions lie at residues 1–27, 136–206, 247–296, and 323–379; these read MAEG…EVGE, RVAT…EGPS, MAFP…KALA, and PEGA…QPSL. Residues 14-27 are compositionally biased toward acidic residues; it reads SVEDMDEGSDEVGE. Polar residues-rich tracts occupy residues 140–151 and 187–196; these read PQVSGEDTQPTT and TSAQSQTGSP. Residues 354 to 363 show a composition bias toward acidic residues; the sequence is DEYESSEEER. The region spanning 413 to 611 is the MAGE domain; it reads LQERANKLVK…REWKAHFLEA (199 aa). A disordered region spans residues 700-720; sequence VSSGTNGGASTSVLDGPSTSS. A compositionally biased stretch (polar residues) spans 701–720; that stretch reads SSGTNGGASTSVLDGPSTSS.

Interacts with TRIM27. As to expression, expressed only in brain and ovary among normal tissues. Isoform 1 and isoform 2 are specifically expressed in glioma cells among cancer cells. Detected in some renal cell carcinoma samples.

Functionally, may enhance ubiquitin ligase activity of RING-type zinc finger-containing E3 ubiquitin-protein ligases. Proposed to act through recruitment and/or stabilization of the Ubl-conjugating enzyme (E2) at the E3:substrate complex. The chain is Melanoma-associated antigen D4 (MAGED4) from Homo sapiens (Human).